Consider the following 121-residue polypeptide: MARVTIEDCLKEVDSRFTLVHLAVRRVLQLRGGAPPLTEVRNKEVVLALREIAAGKVTVDNIRRLEEAKALPEPVAVTQKEDVARLELKEIMDEATLYDASMEFDEAQQVVEPDAEPSEEG.

Belongs to the RNA polymerase subunit omega family. As to quaternary structure, the RNAP catalytic core consists of 2 alpha, 1 beta, 1 beta' and 1 omega subunit. When a sigma factor is associated with the core the holoenzyme is formed, which can initiate transcription.

The catalysed reaction is RNA(n) + a ribonucleoside 5'-triphosphate = RNA(n+1) + diphosphate. In terms of biological role, promotes RNA polymerase assembly. Latches the N- and C-terminal regions of the beta' subunit thereby facilitating its interaction with the beta and alpha subunits. This Syntrophobacter fumaroxidans (strain DSM 10017 / MPOB) protein is DNA-directed RNA polymerase subunit omega.